Consider the following 282-residue polypeptide: 2-dehydro-3-deoxyphosphooctonate aldolase (282 aa).

This sequence belongs to the KdsA family.

Its subcellular location is the cytoplasm. The enzyme catalyses D-arabinose 5-phosphate + phosphoenolpyruvate + H2O = 3-deoxy-alpha-D-manno-2-octulosonate-8-phosphate + phosphate. It functions in the pathway carbohydrate biosynthesis; 3-deoxy-D-manno-octulosonate biosynthesis; 3-deoxy-D-manno-octulosonate from D-ribulose 5-phosphate: step 2/3. The protein operates within bacterial outer membrane biogenesis; lipopolysaccharide biosynthesis. The polypeptide is 2-dehydro-3-deoxyphosphooctonate aldolase (Bordetella avium (strain 197N)).